Reading from the N-terminus, the 328-residue chain is Galactinol synthase 10 (328 aa).

The active site involves Lys106. Mn(2+) is bound by residues Asp122, Asp124, and His248.

The protein belongs to the glycosyltransferase 8 family. Galactosyltransferase subfamily. A divalent metal cation is required as a cofactor.

The protein resides in the cytoplasm. The catalysed reaction is myo-inositol + UDP-alpha-D-galactose = alpha-D-galactosyl-(1-&gt;3)-1D-myo-inositol + UDP + H(+). Functionally, galactinol synthase involved in the biosynthesis of raffinose family oligosaccharides (RFOs) that function as osmoprotectants. May promote plant stress tolerance. The protein is Galactinol synthase 10 (GOLS10) of Arabidopsis thaliana (Mouse-ear cress).